The sequence spans 1058 residues: MRRKGRCHRGSAARHPSSPCSVKHSPTRETLTYAQAQRMVEIEIEGRLHRISIFDPLEIILEDDLTAQEMSECNSNKENSERPPVCLRTKRHKNNRVKKKNEALPSAHGTPASASALPEPKVRIVEYSPPSAPRRPPVYYKFIEKSAEELDNEVEYDMDEEDYAWLEIVNEKRKGDCVPAVSQSMFEFLMDRFEKESHCENQKQGEQQSLIDEDAVCCICMDGECQNSNVILFCDMCNLAVHQECYGVPYIPEGQWLCRHCLQSRARPADCVLCPNKGGAFKKTDDDRWGHVVCALWIPEVGFANTVFIEPIDGVRNIPPARWKLTCYLCKQKGVGACIQCHKANCYTAFHVTCAQKAGLYMKMEPVKELTGGGTTFSVRKTAYCDVHTPPGCTRRPLNIYGDVEMKNGVCRKESSVKTVRSTSKVRKKAKKAKKALAEPCAVLPTVCAPYIPPQRLNRIANQVAIQRKKQFVERAHSYWLLKRLSRNGAPLLRRLQSSLQSQRSSQQRENDEEMKAAKEKLKYWQRLRHDLERARLLIELLRKREKLKREQVKVEQVAMELRLTPLTVLLRSVLDQLQDKDPARIFAQPVSLKEVPDYLDHIKHPMDFATMRKRLEAQGYKNLHEFEEDFDLIIDNCMKYNARDTVFYRAAVRLRDQGGVVLRQARREVDSIGLEEASGMHLPERPAAAPRRPFSWEDVDRLLDPANRAHLGLEEQLRELLDMLDLTCAMKSSGSRSKRAKLLKKEIALLRNKLSQQHSQPLPTGPGLEGFEEDGAALGPEAGEEVLPRLETLLQPRKRSRSTCGDSEVEEESPGKRLDAGLTNGFGGARSEQEPGGGLGRKATPRRRCASESSISSSNSPLCDSSFNAPKCGRGKPALVRRHTLEDRSELISCIENGNYAKAARIAAEVGQSSMWISTDAAASVLEPLKVVWAKCSGYPSYPALIIDPKMPRVPGHHNGVTIPAPPLDVLKIGEHMQTKSDEKLFLVLFFDNKRSWQWLPKSKMVPLGIDETIDKLKMMEGRNSSIRKAVRIAFDRAMNHLSRVHGEPTSDLSDID.

Residues 1–12 (MRRKGRCHRGSA) are compositionally biased toward basic residues. Positions 1–26 (MRRKGRCHRGSAARHPSSPCSVKHSP) are disordered. The tract at residues 31 to 80 (LTYAQAQRMVEIEIEGRLHRISIFDPLEIILEDDLTAQEMSECNSNKENS) is interaction with KAT7/HBO1 and histones. The tract at residues 92–116 (HKNNRVKKKNEALPSAHGTPASASA) is disordered. S128 bears the Phosphoserine mark. Residues 214-264 (DAVCCICMDGECQNSNVILFCDMCNLAVHQECYGVPYIPEGQWLCRHCLQS) form a PHD-type 1 zinc finger. Residues 268 to 301 (PADCVLCPNKGGAFKKTDDDRWGHVVCALWIPEV) form a C2HC pre-PHD-type zinc finger. A PHD-type 2 zinc finger spans residues 325–389 (LTCYLCKQKG…RKTAYCDVHT (65 aa)). Residues K368, K516, and K519 each carry the N6-acetyllysine modification. Residues K554 and K594 each participate in a glycyl lysine isopeptide (Lys-Gly) (interchain with G-Cter in SUMO2) cross-link. A Bromo domain is found at 562–666 (LRLTPLTVLL…DQGGVVLRQA (105 aa)). Disordered stretches follow at residues 755 to 776 (LSQQ…EEDG) and 791 to 868 (LETL…DSSF). At S803 the chain carries Phosphoserine. Low complexity predominate over residues 852–867 (SESSISSSNSPLCDSS). An N6-acetyllysine modification is found at K903. Residue R906 is modified to Phosphoserine. A PWWP domain is found at 929–1012 (PLKVVWAKCS…KSKMVPLGID (84 aa)). A phosphoserine mark is found at S1052 and S1055.

In terms of assembly, component of some HBO1 complex composed of KAT7/HBO1, MEAF6, ING4 and BRD1/BRPF2. Component of the MOZ/MORF complex composed at least of ING5, KAT6A, KAT6B, MEAF6 and one of BRPF1, BRD1/BRPF2 and BRPF3. Interacts (via PHD-type zinc finger domain) with unmodified histone H3. Interacts (via PWWP domain) with dimethylated and trimethylated 'Lys-79' on histone H3. As to expression, highly expressed in testis.

It localises to the nucleus. Its subcellular location is the chromosome. Its function is as follows. Scaffold subunit of various histone acetyltransferase (HAT) complexes, such as the MOZ/MORF and HBO1 complexes, that acts as a regulator of hematopoiesis. Plays a key role in HBO1 complex by directing KAT7/HBO1 specificity towards histone H3 'Lys-14' acetylation (H3K14ac), thereby promoting erythroid differentiation. In Homo sapiens (Human), this protein is Bromodomain-containing protein 1.